The following is a 102-amino-acid chain: Urease subunit beta (102 aa).

The protein belongs to the urease beta subunit family. As to quaternary structure, heterotrimer of UreA (gamma), UreB (beta) and UreC (alpha) subunits. Three heterotrimers associate to form the active enzyme.

The protein resides in the cytoplasm. The catalysed reaction is urea + 2 H2O + H(+) = hydrogencarbonate + 2 NH4(+). Its pathway is nitrogen metabolism; urea degradation; CO(2) and NH(3) from urea (urease route): step 1/1. This chain is Urease subunit beta, found in Acinetobacter baylyi (strain ATCC 33305 / BD413 / ADP1).